Consider the following 344-residue polypeptide: Protein-glutamate methylesterase/protein-glutamine glutaminase (344 aa).

Residues 7-124 (RVLVVDDSAF…SLTFRQVAPE (118 aa)) enclose the Response regulatory domain. At D58 the chain carries 4-aspartylphosphate. The 191-residue stretch at 154 to 344 (PAVSGKIVVI…KIPEKLIELV (191 aa)) folds into the CheB-type methylesterase domain. Residues S166, H193, and D289 contribute to the active site.

This sequence belongs to the CheB family. Phosphorylated by CheA. Phosphorylation of the N-terminal regulatory domain activates the methylesterase activity.

It localises to the cytoplasm. It carries out the reaction [protein]-L-glutamate 5-O-methyl ester + H2O = L-glutamyl-[protein] + methanol + H(+). The catalysed reaction is L-glutaminyl-[protein] + H2O = L-glutamyl-[protein] + NH4(+). Functionally, involved in chemotaxis. Part of a chemotaxis signal transduction system that modulates chemotaxis in response to various stimuli. Catalyzes the demethylation of specific methylglutamate residues introduced into the chemoreceptors (methyl-accepting chemotaxis proteins or MCP) by CheR. Also mediates the irreversible deamidation of specific glutamine residues to glutamic acid. In Thermotoga maritima (strain ATCC 43589 / DSM 3109 / JCM 10099 / NBRC 100826 / MSB8), this protein is Protein-glutamate methylesterase/protein-glutamine glutaminase.